We begin with the raw amino-acid sequence, 400 residues long: Acetate kinase (400 aa).

Asparagine 7 is a Mg(2+) binding site. ATP is bound at residue lysine 14. Residue arginine 91 participates in substrate binding. Residue aspartate 148 is the Proton donor/acceptor of the active site. Residues 208–212, 283–285, and 332–336 each bind ATP; these read HIGNG, DFR, and GIGEH. Mg(2+) is bound at residue glutamate 387.

Belongs to the acetokinase family. In terms of assembly, homodimer. The cofactor is Mg(2+). It depends on Mn(2+) as a cofactor.

The protein resides in the cytoplasm. It carries out the reaction acetate + ATP = acetyl phosphate + ADP. Its pathway is metabolic intermediate biosynthesis; acetyl-CoA biosynthesis; acetyl-CoA from acetate: step 1/2. Catalyzes the formation of acetyl phosphate from acetate and ATP. Can also catalyze the reverse reaction. The sequence is that of Acetate kinase from Clostridium beijerinckii (strain ATCC 51743 / NCIMB 8052) (Clostridium acetobutylicum).